A 91-amino-acid polypeptide reads, in one-letter code: Glycophorin-B (91 aa).

The signal sequence occupies residues 1–19; the sequence is MYGKIIFVLLLSEIVSISA. Over 20–59 the chain is Extracellular; sequence LSTTEVAMHTSTSSSVTKSYISSQTNGETGQLVHRFTVPA. Residue T36 is glycosylated (O-linked (GalNAc...) threonine). S38 carries O-linked (GalNAc...) serine glycosylation. Residues 60 to 81 form a helical membrane-spanning segment; the sequence is PVVIILIILCVMAGIIGTILLI. At 82–91 the chain is on the cytoplasmic side; the sequence is SYSIRRLIKA.

It belongs to the glycophorin-A family. In terms of assembly, component of the ankyrin-1 complex in the erythrocyte, composed of ANK1, RHCE, RHAG, SLC4A1, EPB42, GYPA, GYPB and AQP1. Interacts (via the N-terminal) with RHAG; this interaction bridges the (RHAG)2(RHCE) heterotrimer with the SLC4A1 Band 3 I dimer complexed with GYPA. The N-terminal extracellular domain is heavily glycosylated on serine and threonine residues.

Its subcellular location is the cell membrane. Functionally, component of the ankyrin-1 complex, a multiprotein complex involved in the stability and shape of the erythrocyte membrane. The chain is Glycophorin-B from Homo sapiens (Human).